Reading from the N-terminus, the 165-residue chain is Histone H1-like protein HC2 (165 aa).

2 stretches are compositionally biased toward basic residues: residues 1–50 (MLGV…KTVA) and 59–80 (PVAK…KKTV). The segment at 1–80 (MLGVQKKRST…VRKVAAKKTV (80 aa)) is disordered.

Belongs to the histone H1/H5 family. HCT subfamily.

Functionally, might have a role in establishing the nucleoid structure of elementary bodies. The sequence is that of Histone H1-like protein HC2 (hctB) from Chlamydia trachomatis.